A 431-amino-acid polypeptide reads, in one-letter code: Adenylosuccinate synthetase (431 aa).

Residues 12 to 18 and 40 to 42 contribute to the GTP site; these read GDEGKGK and GHT. Aspartate 13 acts as the Proton acceptor in catalysis. Positions 13 and 40 each coordinate Mg(2+). IMP contacts are provided by residues 13 to 16, 38 to 41, threonine 130, arginine 144, glutamine 225, threonine 240, and arginine 304; these read DEGK and NAGH. Histidine 41 (proton donor) is an active-site residue. 300-306 provides a ligand contact to substrate; that stretch reads ATTGRPR. Residues arginine 306, 332–334, and 414–416 each bind GTP; these read KLD and SVG.

Belongs to the adenylosuccinate synthetase family. In terms of assembly, homodimer. Requires Mg(2+) as cofactor.

The protein resides in the cytoplasm. It carries out the reaction IMP + L-aspartate + GTP = N(6)-(1,2-dicarboxyethyl)-AMP + GDP + phosphate + 2 H(+). The protein operates within purine metabolism; AMP biosynthesis via de novo pathway; AMP from IMP: step 1/2. Plays an important role in the de novo pathway of purine nucleotide biosynthesis. Catalyzes the first committed step in the biosynthesis of AMP from IMP. The polypeptide is Adenylosuccinate synthetase (Geotalea daltonii (strain DSM 22248 / JCM 15807 / FRC-32) (Geobacter daltonii)).